A 446-amino-acid chain; its full sequence is Neuropeptide Y receptor type 5 (446 aa).

Topologically, residues 1-42 (MDLELQDFYNKTLATENNTAATRNSDFPVWDDYKSSVDDLQY) are extracellular. Asparagine 10 and asparagine 17 each carry an N-linked (GlcNAc...) asparagine glycan. The chain crosses the membrane as a helical span at residues 43–63 (FLIGLYTFVSLLGFMGNLLIL). The Cytoplasmic segment spans residues 64-77 (MALMRKRNQKTMVN). Residues 78–98 (FLIGNLAFSDILVVLFCSPFT) form a helical membrane-spanning segment. Residues 99 to 117 (LTSVLLDQWMFGKVMCHIM) lie on the Extracellular side of the membrane. Cysteines 114 and 198 form a disulfide. The helical transmembrane segment at 118–138 (PFLQCVSVLVSTLILISIAIV) threads the bilayer. Topologically, residues 139-156 (RYHMIKHPISNNLTANHG) are cytoplasmic. The helical transmembrane segment at 157–177 (YFLIATVWTLGFAICSPLPVF) threads the bilayer. Residues 178 to 208 (HSLVELQETFDSALLSSRYLCVESWPSDSYR) are Extracellular-facing. The chain crosses the membrane as a helical span at residues 209–229 (IAFTISLLLVQYILPLVCLTV). Residues 230 to 369 (SHTSVCRSIS…KKRSRSVFYR (140 aa)) are Cytoplasmic-facing. A helical transmembrane segment spans residues 370–390 (LTILILVFAVSWMPLHLFHVV). Over 391–407 (TDFNDNLISNRHFKLVY) the chain is Extracellular. A helical membrane pass occupies residues 408–428 (CICHLLGMMSCCLNPILYGFL). Residues 429-446 (NNGIKADLISLIQCLHMS) are Cytoplasmic-facing. Cysteine 442 carries S-palmitoyl cysteine lipidation.

It belongs to the G-protein coupled receptor 1 family.

It localises to the cell membrane. Its function is as follows. Receptor for neuropeptide Y and peptide YY. The activity of this receptor is mediated by G proteins that inhibit adenylate cyclase activity. Seems to be associated with food intake. Could be involved in feeding disorders. The polypeptide is Neuropeptide Y receptor type 5 (NPY5R) (Canis lupus familiaris (Dog)).